A 432-amino-acid polypeptide reads, in one-letter code: uncharacterized protein (432 aa).

2 SIS domains span residues 105–244 and 277–422; these read WLTE…DLVS and CDKK…VDLP.

This is an uncharacterized protein from Saccharomyces cerevisiae (strain Lalvin EC1118 / Prise de mousse) (Baker's yeast).